The chain runs to 528 residues: Chromosomal replication initiator protein DnaA (528 aa).

The interval 1–104 (MNDDPNALAR…PVDDEPESEA (104 aa)) is domain I, interacts with DnaA modulators. Residues 93 to 159 (AAPVDDEPES…DFEEVDDDSE (67 aa)) are disordered. Residues 104–123 (APSRERRPDPEPVHTPRHLE) are compositionally biased toward basic and acidic residues. The domain II stretch occupies residues 105-187 (PSRERRPDPE…GPAPAATGGN (83 aa)). Residues 149-159 (TDFEEVDDDSE) are compositionally biased toward acidic residues. Residues 188–404 (SLNAKYTFDT…GALIRVTAFA (217 aa)) form a domain III, AAA+ region region. ATP-binding residues include Gly-232, Gly-234, Lys-235, and Thr-236. Positions 405-528 (SLNRQPLDLT…TARIKQRSKR (124 aa)) are domain IV, binds dsDNA.

Belongs to the DnaA family. As to quaternary structure, oligomerizes as a right-handed, spiral filament on DNA at oriC.

The protein resides in the cytoplasm. Its function is as follows. Plays an essential role in the initiation and regulation of chromosomal replication. ATP-DnaA binds to the origin of replication (oriC) to initiate formation of the DNA replication initiation complex once per cell cycle. Binds the DnaA box (a 9 base pair repeat at the origin) and separates the double-stranded (ds)DNA. Forms a right-handed helical filament on oriC DNA; dsDNA binds to the exterior of the filament while single-stranded (ss)DNA is stabiized in the filament's interior. The ATP-DnaA-oriC complex binds and stabilizes one strand of the AT-rich DNA unwinding element (DUE), permitting loading of DNA polymerase. After initiation quickly degrades to an ADP-DnaA complex that is not apt for DNA replication. Binds acidic phospholipids. This chain is Chromosomal replication initiator protein DnaA, found in Rhodococcus opacus (strain B4).